We begin with the raw amino-acid sequence, 280 residues long: Protoheme IX farnesyltransferase 2 (280 aa).

9 helical membrane-spanning segments follow: residues 12–32 (VIWL…GGVD), 35–55 (LFSL…FNHY), 76–96 (LITP…GISL), 98–118 (FLLL…FYAV), 129–149 (WLNI…GYAL), 158–178 (AVLI…ALAF), 199–221 (ERAV…WLYL), 226–248 (GAGG…YAAV), and 255–275 (MWKM…ALMI).

This sequence belongs to the UbiA prenyltransferase family. Protoheme IX farnesyltransferase subfamily.

It localises to the cell membrane. It catalyses the reaction heme b + (2E,6E)-farnesyl diphosphate + H2O = Fe(II)-heme o + diphosphate. The protein operates within porphyrin-containing compound metabolism; heme O biosynthesis; heme O from protoheme: step 1/1. Functionally, converts heme B (protoheme IX) to heme O by substitution of the vinyl group on carbon 2 of heme B porphyrin ring with a hydroxyethyl farnesyl side group. This Pyrobaculum aerophilum (strain ATCC 51768 / DSM 7523 / JCM 9630 / CIP 104966 / NBRC 100827 / IM2) protein is Protoheme IX farnesyltransferase 2.